The following is a 204-amino-acid chain: Urease accessory protein UreG (204 aa).

Position 11-18 (11-18 (GPVGAGKT)) interacts with GTP.

It belongs to the SIMIBI class G3E GTPase family. UreG subfamily. As to quaternary structure, homodimer. UreD, UreF and UreG form a complex that acts as a GTP-hydrolysis-dependent molecular chaperone, activating the urease apoprotein by helping to assemble the nickel containing metallocenter of UreC. The UreE protein probably delivers the nickel.

It is found in the cytoplasm. Its function is as follows. Facilitates the functional incorporation of the urease nickel metallocenter. This process requires GTP hydrolysis, probably effectuated by UreG. The sequence is that of Urease accessory protein UreG from Staphylococcus aureus (strain Mu3 / ATCC 700698).